Consider the following 365-residue polypeptide: S-type anion channel SLAH4 (365 aa).

At 1–25 (MEIPSQEIHIMIDNTISRRKERKTN) the chain is on the cytoplasmic side. The chain crosses the membrane as a helical span at residues 26-46 (LADAEPIVLMSVLSSLHAGYF). At 47 to 73 (RISLSLCSQALLWKIMVHLHSELPSMA) the chain is on the extracellular side. A helical membrane pass occupies residues 74-94 (YYLLWYLALATQVSLCFLYAF). Residues 95–106 (KCIFLFDMVKEE) lie on the Cytoplasmic side of the membrane. A helical transmembrane segment spans residues 107-127 (FSHYIGVNYLYAPSISCLLLL). Over 128–131 (QSAP) the chain is Extracellular. A helical transmembrane segment spans residues 132–152 (MIEPHSVLYQTLFWIFAVPVL). The Cytoplasmic portion of the chain corresponds to 153 to 168 (TLDTKLYGQWFTTEKR). A helical membrane pass occupies residues 169-189 (FLSIMANPASQVSVIANLVAA). Topologically, residues 190–199 (RGAAEMGWKE) are extracellular. The chain crosses the membrane as a helical span at residues 200–220 (CALCLFSLGMVHYLVIFVTLY). Residues 221–235 (QRLPGGNNFPTTLRP) lie on the Cytoplasmic side of the membrane. The chain crosses the membrane as a helical span at residues 236–256 (VFFLFFAAPATASLAWNSICG). Residue Asn-257 is a topological domain, extracellular. A helical transmembrane segment spans residues 258–278 (FDTIAKMLFFLSLFIFISLVC). At 279 to 291 (RPNLLKKSIKRFN) the chain is on the cytoplasmic side. The chain crosses the membrane as a helical span at residues 292-312 (VAWWAYSFPITFLALNSVQYA). Residues 313 to 321 (QEVKDHVAS) are Extracellular-facing. Residues 322-342 (VLMFIFSSMSVLIFISVMLLT) form a helical membrane-spanning segment. Over 343 to 365 (AANSKRLLRRDHVLWSSTGPKDK) the chain is Cytoplasmic.

This sequence belongs to the SLAC1 S-type anion channel family. Homotrimer.

The protein resides in the cell membrane. Functionally, slow, weak voltage-dependent S-type anion efflux channel involved in maintenance of anion homeostasis. The polypeptide is S-type anion channel SLAH4 (SLAH4) (Arabidopsis thaliana (Mouse-ear cress)).